The following is a 419-amino-acid chain: LWamide neuropeptides (419 aa).

Residues 1-27 (MEKEMRNLMLLVLLTVILDNGIGKCNA) form the signal peptide. A disordered region spans residues 27-48 (AKSEEDQDGNARNNRIDKNDDN). Positions 28–104 (KSEEDQDGNA…ENLDIDSTVQ (77 aa)) are excised as a propeptide. The residue at position 110 (Trp-110) is a Tryptophan amide. Residues 113–140 (EADFDNTRAHDSAQISDEKQSGLWVGDA) constitute a propeptide that is removed on maturation. Residues 120 to 132 (RAHDSAQISDEKQ) are compositionally biased toward basic and acidic residues. The segment at 120-332 (RAHDSAQISD…PGLWGRQVED (213 aa)) is disordered. Tryptophan amide is present on Trp-146. Positions 149-150 (DA) are excised as a propeptide. A Tryptophan amide modification is found at Trp-156. Positions 159–160 (DA) are excised as a propeptide. At Trp-166 the chain carries Tryptophan amide. Positions 169–170 (DA) are excised as a propeptide. Tryptophan amide is present on Trp-176. Residues 179 to 180 (DA) constitute a propeptide that is removed on maturation. Tryptophan amide is present on Trp-186. Residues 189-190 (DA) constitute a propeptide that is removed on maturation. The residue at position 196 (Trp-196) is a Tryptophan amide. A propeptide spanning residues 199–200 (DA) is cleaved from the precursor. Residue Trp-206 is modified to Tryptophan amide. Positions 209-210 (DA) are excised as a propeptide. At Trp-216 the chain carries Tryptophan amide. A propeptide spans 218 to 220 (GDA) (seems to have a sequencing error or a mutation in position 218; Gly instead of Arg). Tryptophan amide is present on Trp-226. Residues 229–230 (DA) constitute a propeptide that is removed on maturation. Trp-236 is subject to Tryptophan amide. The propeptide occupies 239–240 (DA). Trp-246 carries the tryptophan amide modification. The propeptide occupies 249–250 (DA). Trp-256 is modified (tryptophan amide). A propeptide spanning residues 259-260 (DA) is cleaved from the precursor. A Tryptophan amide modification is found at Trp-266. Residues 269–270 (DA) constitute a propeptide that is removed on maturation. Trp-276 is subject to Tryptophan amide. Positions 279–280 (DT) are excised as a propeptide. The residue at position 286 (Trp-286) is a Tryptophan amide. The propeptide occupies 289–290 (DA). Trp-296 is subject to Tryptophan amide. Propeptides lie at residues 299-300 (DA) and 309-320 (DNNVIKSRSDDA). The residue at position 326 (Trp-326) is a Tryptophan amide. Residues 329–419 (QVEDGPTKIW…RRNNKKNNKF (91 aa)) constitute a propeptide that is removed on maturation.

Belongs to the LWamide neuropeptide family. As to expression, in planula larvae, expressed in a narrow ring of ectodermal neurosensory cells around the widest circumference at the anterior of the larvae. In primary polyps, expression is confined to endodermal cells of the hypostome. In mature polyps, expression is strong in the epidermis from the tentacle level to the base of the polyp and weak in the gastrodermal cells in the apical hypostome.

The protein resides in the secreted. LWamide peptides may be involved in induction of metamorphosis. The protein is LWamide neuropeptides of Hydractinia echinata (Snail fur).